Reading from the N-terminus, the 192-residue chain is Leucine-rich repeat-containing protein 51 (192 aa).

LRR repeat units lie at residues 49–71 (SLTQ…NQVA), 80–101 (NLAW…LTTF), and 103–124 (NLSV…NKLA). The 39-residue stretch at 137 to 175 (NPMEEEKGYRQYVLCTLSRITTFDFSGVTKADRTTAEVW) folds into the LRRCT domain.

It localises to the cytoplasm. This chain is Leucine-rich repeat-containing protein 51, found in Homo sapiens (Human).